The chain runs to 82 residues: Small ribosomal subunit protein bS16 (82 aa).

It belongs to the bacterial ribosomal protein bS16 family.

The sequence is that of Small ribosomal subunit protein bS16 from Vibrio campbellii (strain ATCC BAA-1116).